Reading from the N-terminus, the 286-residue chain is GTP cyclohydrolase MptA (286 aa).

Belongs to the GTP cyclohydrolase IV family. In terms of assembly, homodimer. Requires Fe(2+) as cofactor.

It catalyses the reaction GTP + H2O = 7,8-dihydroneopterin 2',3'-cyclic phosphate + formate + diphosphate + H(+). It functions in the pathway cofactor biosynthesis; 5,6,7,8-tetrahydromethanopterin biosynthesis. Its function is as follows. Converts GTP to 7,8-dihydro-D-neopterin 2',3'-cyclic phosphate, the first intermediate in the biosynthesis of coenzyme methanopterin. In Thermoplasma acidophilum (strain ATCC 25905 / DSM 1728 / JCM 9062 / NBRC 15155 / AMRC-C165), this protein is GTP cyclohydrolase MptA.